The following is a 317-amino-acid chain: Mitochondrial thiamine pyrophosphate carrier 1 (317 aa).

A run of 6 helical transmembrane segments spans residues 15 to 37, 80 to 100, 118 to 138, 168 to 190, 205 to 227, and 281 to 300; these read TVSW…MATA, IPAT…YSWF, LTVG…LDLL, GFFT…MFLT, FWSR…TMVF, and GLTM…LFVY. Solcar repeat units lie at residues 16–103, 112–197, and 206–306; these read VSWY…FNNV, SQQG…VNIV, and WSRP…TMDL.

This sequence belongs to the mitochondrial carrier (TC 2.A.29) family.

The protein localises to the mitochondrion inner membrane. In terms of biological role, mitochondrial transporter that mediates uptake of thiamine pyrophosphate (ThPP) into mitochondria. The sequence is that of Mitochondrial thiamine pyrophosphate carrier 1 (TPC1) from Kluyveromyces lactis (strain ATCC 8585 / CBS 2359 / DSM 70799 / NBRC 1267 / NRRL Y-1140 / WM37) (Yeast).